The sequence spans 104 residues: MGQPAKVLQLFKTLHRTRQQVFKNDKRALEAARVKINEEFKKHKNETSPEKIKEMLKIGSDVELLLRTSVIQGIHTDHDTLQLVPRKDLLTENVPYCDAPTQKL.

Ser-60 carries the post-translational modification Phosphoserine.

It belongs to the complex I LYR family. Interacts with UQCRFS1.

The protein localises to the mitochondrion matrix. Its function is as follows. Assembly factor required for Rieske Fe-S protein UQCRFS1 incorporation into the cytochrome b-c1 (CIII) complex. Functions as a chaperone, binding to this subunit within the mitochondrial matrix and stabilizing it prior to its translocation and insertion into the late CIII dimeric intermediate within the mitochondrial inner membrane. The chain is Complex III assembly factor LYRM7 (Lyrm7) from Rattus norvegicus (Rat).